We begin with the raw amino-acid sequence, 644 residues long: (E2-independent) E3 ubiquitin-conjugating enzyme FATS (644 aa).

The segment at 1–67 (MISPVVISRL…LGILTPSDDQ (67 aa)) is required for interaction with p53/TP53. Disordered regions lie at residues 62 to 83 (TPSD…LGKG), 305 to 349 (LGSG…SSHT), 367 to 413 (VLSG…SILS), and 475 to 507 (NEDP…EDSY). A required for interaction with HDAC1 region spans residues 67 to 175 (QGLETEPLST…RLSARQDYWV (109 aa)). A compositionally biased stretch (low complexity) spans 398 to 410 (EGDSSPSSDGQPS). Residues 481 to 492 (TPEPSPATPSPS) show a composition bias toward pro residues. The segment at 516-644 (TLQEALEVHR…LDQLLQRNAV (129 aa)) is ALMS motif. A coiled-coil region spans residues 598 to 629 (KRIYNNLPEVKKKKEEQKKRMILQSNRLRAEV).

In terms of assembly, interacts with HDAC1; the interaction prevents binding of HDAC1 to CDKN1A/p21 and facilitates the acetylation and stabilization of CDKN1A/p21. Interacts with p53/TP53; the interaction inhibits binding of p53/TP53 and MDM2. Highly expressed in testis. Weak expression found in brain, lung, heart, ovary, thymus, spleen and kidney.

The protein localises to the cytoplasm. It is found in the cytoskeleton. Its subcellular location is the microtubule organizing center. The protein resides in the centrosome. Functionally, tumor suppressor that is required to sustain G2/M checkpoint after DNA damage. Acts as a p53/TP53 activator by inhibiting MDM2 binding to p53/TP53 and stimulating non-proteolytic polyubiquitination of p53/TP53. Exhibits ubiquitin ligase (E3) activity and assemble ubiquitin polymers through 'Lys-11'- (K11-), 'Lys-29'- (K29-) and 'Lys-63'- (K63)-linkages, independently of the ubiquitin-conjugating enzyme (E2). Promotes p53/TP53-dependent transcription of CDKN1A/p21, leading to robust checkpoint response. Mediates CDKN1A/p21 protein stability in a ubiquitin-independent manner. Interacts with HDAC1 and prevents binding of HDAC1 to CDKN1A/p21 and facilitates the acetylation and stabilization of CDKN1A/p21. May have a role in the assembly of primary cilia. The polypeptide is (E2-independent) E3 ubiquitin-conjugating enzyme FATS (Mus musculus (Mouse)).